Consider the following 150-residue polypeptide: Transcription antitermination protein NusB (150 aa).

This sequence belongs to the NusB family.

Involved in transcription antitermination. Required for transcription of ribosomal RNA (rRNA) genes. Binds specifically to the boxA antiterminator sequence of the ribosomal RNA (rrn) operons. This chain is Transcription antitermination protein NusB, found in Streptococcus pyogenes serotype M4 (strain MGAS10750).